The chain runs to 203 residues: Twist-related protein 1 (203 aa).

Positions 1–18 (MMQDVSSSPVSPADDSLS) are enriched in low complexity. Residues 1–105 (MMQDVSSSPV…SGGGSPQSYE (105 aa)) form a disordered region. Basic residues predominate over residues 34–43 (RGGRKRRSSR). 2 stretches are compositionally biased toward gly residues: residues 46-65 (AGGGAGPGGAAGGGVGGGDE) and 80-100 (GCGGGGGSAGGGGGSSSGGGS). Residues 109–160 (TQRVMANVRGRQRTQSLNEAFAALRKIIPTLPSDKLSKIQTLKLAARYIDFL) form the bHLH domain. A sufficient for transactivation activity region spans residues 162–192 (QVLQSDELDSKMASCSYVAHERLSYAFSVWR).

Efficient DNA binding requires dimerization with another bHLH protein. Homodimer or heterodimer with E proteins such as TCF3. ID1 binds preferentially to TCF3 but does not interact efficiently with TWIST1 so ID1 levels control the amount of TCF3 available to dimerize with TWIST and thus determine the type of dimer formed.

Its subcellular location is the nucleus. Functionally, acts as a transcriptional regulator. Inhibits myogenesis by sequestrating E proteins, inhibiting trans-activation by MEF2, and inhibiting DNA-binding by MYOD1 through physical interaction. This interaction probably involves the basic domains of both proteins. Also represses expression of pro-inflammatory cytokines such as TNFA and IL1B. Regulates cranial suture patterning and fusion. Activates transcription as a heterodimer with E proteins. Regulates gene expression differentially, depending on dimer composition. Homodimers induce expression of FGFR2 and POSTN while heterodimers repress FGFR2 and POSTN expression and induce THBS1 expression. Heterodimerization is also required for osteoblast differentiation. Represses the activity of the circadian transcriptional activator: NPAS2-BMAL1 heterodimer. The polypeptide is Twist-related protein 1 (TWIST1) (Callithrix jacchus (White-tufted-ear marmoset)).